A 286-amino-acid polypeptide reads, in one-letter code: Glycine--tRNA ligase alpha subunit (286 aa).

It belongs to the class-II aminoacyl-tRNA synthetase family. As to quaternary structure, tetramer of two alpha and two beta subunits.

The protein localises to the cytoplasm. The enzyme catalyses tRNA(Gly) + glycine + ATP = glycyl-tRNA(Gly) + AMP + diphosphate. The sequence is that of Glycine--tRNA ligase alpha subunit from Thermotoga sp. (strain RQ2).